We begin with the raw amino-acid sequence, 149 residues long: HTH-type transcriptional regulator LrpB (149 aa).

The 62-residue stretch at Ile-3–Ser-64 folds into the HTH asnC-type domain. Residues Trp-22–Lys-41 constitute a DNA-binding region (H-T-H motif).

In terms of biological role, negative regulation of glyA transcription and kinB-dependent sporulation. The protein is HTH-type transcriptional regulator LrpB (lrpB) of Bacillus subtilis (strain 168).